A 70-amino-acid polypeptide reads, in one-letter code: DNA gyrase inhibitor YacG (70 aa).

Zn(2+) contacts are provided by Cys-9, Cys-12, Cys-28, and Cys-32. The segment at 43–70 is disordered; that stretch reads ESRKIPGSSIDPESIVTSNNKQDNVDEQ.

This sequence belongs to the DNA gyrase inhibitor YacG family. As to quaternary structure, interacts with GyrB. Zn(2+) is required as a cofactor.

Its function is as follows. Inhibits all the catalytic activities of DNA gyrase by preventing its interaction with DNA. Acts by binding directly to the C-terminal domain of GyrB, which probably disrupts DNA binding by the gyrase. This Legionella pneumophila (strain Lens) protein is DNA gyrase inhibitor YacG.